A 565-amino-acid chain; its full sequence is Dihydroxy-acid dehydratase (565 aa).

D83 contacts Mg(2+). C124 serves as a coordination point for [2Fe-2S] cluster. Residues D125 and K126 each coordinate Mg(2+). Position 126 is an N6-carboxylysine (K126). C197 is a [2Fe-2S] cluster binding site. Residue E451 coordinates Mg(2+). S477 serves as the catalytic Proton acceptor.

It belongs to the IlvD/Edd family. Homodimer. [2Fe-2S] cluster serves as cofactor. It depends on Mg(2+) as a cofactor.

The enzyme catalyses (2R)-2,3-dihydroxy-3-methylbutanoate = 3-methyl-2-oxobutanoate + H2O. The catalysed reaction is (2R,3R)-2,3-dihydroxy-3-methylpentanoate = (S)-3-methyl-2-oxopentanoate + H2O. Its pathway is amino-acid biosynthesis; L-isoleucine biosynthesis; L-isoleucine from 2-oxobutanoate: step 3/4. It functions in the pathway amino-acid biosynthesis; L-valine biosynthesis; L-valine from pyruvate: step 3/4. Its function is as follows. Functions in the biosynthesis of branched-chain amino acids. Catalyzes the dehydration of (2R,3R)-2,3-dihydroxy-3-methylpentanoate (2,3-dihydroxy-3-methylvalerate) into 2-oxo-3-methylpentanoate (2-oxo-3-methylvalerate) and of (2R)-2,3-dihydroxy-3-methylbutanoate (2,3-dihydroxyisovalerate) into 2-oxo-3-methylbutanoate (2-oxoisovalerate), the penultimate precursor to L-isoleucine and L-valine, respectively. The protein is Dihydroxy-acid dehydratase of Symbiobacterium thermophilum (strain DSM 24528 / JCM 14929 / IAM 14863 / T).